The chain runs to 353 residues: Glutamate 5-kinase (353 aa).

Lysine 8 contributes to the ATP binding site. Serine 47, aspartate 134, and asparagine 146 together coordinate substrate. ATP is bound at residue 198 to 204; sequence TGGIRSK. The 78-residue stretch at 262-339 folds into the PUA domain; it reads AGKIYVNKGA…SDLKKILGYE (78 aa).

It belongs to the glutamate 5-kinase family.

It localises to the cytoplasm. The catalysed reaction is L-glutamate + ATP = L-glutamyl 5-phosphate + ADP. Its pathway is amino-acid biosynthesis; L-proline biosynthesis; L-glutamate 5-semialdehyde from L-glutamate: step 1/2. Its function is as follows. Catalyzes the transfer of a phosphate group to glutamate to form L-glutamate 5-phosphate. This Thermotoga maritima (strain ATCC 43589 / DSM 3109 / JCM 10099 / NBRC 100826 / MSB8) protein is Glutamate 5-kinase.